Consider the following 154-residue polypeptide: MGLSDGEWQLVLNVWGKVEADVPSHGQEVLISLFKGHPETLEKFDKFKHLKSEDEMKASEELKKHGVTVLTALGGILKKKGHHEAELKPLAQSHATKHKIPVKYLEFISDAIVHVLQKKHPGDFGADAQGAMKKALELFRNDMAAKYKELGFQG.

Residues glycine 2–lysine 148 enclose the Globin domain. Serine 4 bears the Phosphoserine mark. Histidine 65 contacts nitrite. O2 is bound at residue histidine 65. Threonine 68 carries the post-translational modification Phosphothreonine. Histidine 94 contacts heme b.

It belongs to the globin family. Monomeric.

Its subcellular location is the cytoplasm. The protein localises to the sarcoplasm. The catalysed reaction is Fe(III)-heme b-[protein] + nitric oxide + H2O = Fe(II)-heme b-[protein] + nitrite + 2 H(+). The enzyme catalyses H2O2 + AH2 = A + 2 H2O. In terms of biological role, monomeric heme protein which primary function is to store oxygen and facilitate its diffusion within muscle tissues. Reversibly binds oxygen through a pentacoordinated heme iron and enables its timely and efficient release as needed during periods of heightened demand. Depending on the oxidative conditions of tissues and cells, and in addition to its ability to bind oxygen, it also has a nitrite reductase activity whereby it regulates the production of bioactive nitric oxide. Under stress conditions, like hypoxia and anoxia, it also protects cells against reactive oxygen species thanks to its pseudoperoxidase activity. The protein is Myoglobin (MB) of Aotus trivirgatus (Three-striped night monkey).